A 210-amino-acid chain; its full sequence is Large ribosomal subunit protein uL4 (210 aa).

Residues 41-79 (MANARQGTASTKTRAEVRGGGRKPWRQKGTGRARAGSNR) form a disordered region. Positions 43–52 (NARQGTASTK) are enriched in polar residues. A compositionally biased stretch (basic residues) spans 60 to 71 (GGRKPWRQKGTG).

It belongs to the universal ribosomal protein uL4 family. In terms of assembly, part of the 50S ribosomal subunit.

Functionally, one of the primary rRNA binding proteins, this protein initially binds near the 5'-end of the 23S rRNA. It is important during the early stages of 50S assembly. It makes multiple contacts with different domains of the 23S rRNA in the assembled 50S subunit and ribosome. Forms part of the polypeptide exit tunnel. This is Large ribosomal subunit protein uL4 from Cyanothece sp. (strain PCC 7425 / ATCC 29141).